Reading from the N-terminus, the 807-residue chain is Poly-beta-1,6-N-acetyl-D-glucosamine export protein (807 aa).

Positions 1–26 (MYSSSRKRCPKTKWALKLLTAAFLAA) are cleaved as a signal peptide. TPR repeat units follow at residues 98 to 131 (ARGYAAVAVAYRNLQQWQNSLTLWQKALSLEPQN), 165 to 198 (KANLLAEAYIYKLAGRHQDELRAMTESLPENAST), and 279 to 311 (RIQVDHLGALLTRDRYKDVISHYQRLKKTGQII).

The protein localises to the cell outer membrane. In terms of biological role, exports the biofilm adhesin polysaccharide poly-beta-1,6-N-acetyl-D-glucosamine (PGA) across the outer membrane. The PGA transported seems to be partially N-deacetylated since N-deacetylation of PGA by PgaB is needed for PGA export through the PgaA porin. This Escherichia coli O157:H7 protein is Poly-beta-1,6-N-acetyl-D-glucosamine export protein (pgaA).